Here is a 363-residue protein sequence, read N- to C-terminus: Spermidine/putrescine import ATP-binding protein PotA (363 aa).

Positions 4-234 constitute an ABC transporter domain; the sequence is LEIRNVTRRF…PRNHFVADFI (231 aa). 36–43 is a binding site for ATP; the sequence is GPSGCGKT.

Belongs to the ABC transporter superfamily. Spermidine/putrescine importer (TC 3.A.1.11.1) family. In terms of assembly, the complex is composed of two ATP-binding proteins (PotA), two transmembrane proteins (PotB and PotC) and a solute-binding protein (PotD).

It localises to the cell inner membrane. The catalysed reaction is ATP + H2O + polyamine-[polyamine-binding protein]Side 1 = ADP + phosphate + polyamineSide 2 + [polyamine-binding protein]Side 1.. In terms of biological role, part of the ABC transporter complex PotABCD involved in spermidine/putrescine import. Responsible for energy coupling to the transport system. The sequence is that of Spermidine/putrescine import ATP-binding protein PotA from Nitrosospira multiformis (strain ATCC 25196 / NCIMB 11849 / C 71).